Here is a 296-residue protein sequence, read N- to C-terminus: MRHKELLSKTFQGPAVVCRTPTSHVYMFKNGSGDSGDASEEESHRVVLRPRGKELQKSGVHQPHQAGAGDVVLLQRELAQEDSLNKLALQYGCKVADIKKVNNFIREQDLYALKSIKSPVKNHGILTETHKELKPLLSPSSETTVTVELPDADRAGAGTDAQASQLMDFFKGIDQDIECAVQSEIFLHESYCIDTSHQPLLPAPPKTPMDGADCGIQWWNAVFIMLLIGIVLPIFYLVYFKIQASGETPNSLNTAAIPNGSMAMGTVPGQAPRLAVAVPTVPSADSQFSQTTQAGN.

Residues 1 to 217 are Extracellular-facing; it reads MRHKELLSKT…PMDGADCGIQ (217 aa). An N-linked (GlcNAc...) asparagine glycan is attached at N30. A LysM domain is found at 74-118; that stretch reads LQRELAQEDSLNKLALQYGCKVADIKKVNNFIREQDLYALKSIKS. A helical transmembrane segment spans residues 218 to 238; sequence WWNAVFIMLLIGIVLPIFYLV. Topologically, residues 239–296 are cytoplasmic; the sequence is YFKIQASGETPNSLNTAAIPNGSMAMGTVPGQAPRLAVAVPTVPSADSQFSQTTQAGN.

Its subcellular location is the membrane. This Pongo abelii (Sumatran orangutan) protein is LysM and putative peptidoglycan-binding domain-containing protein 4 (LYSMD4).